A 178-amino-acid chain; its full sequence is MGLELVTSGKNLPEEINVVIEIPKDSEPVKYEVDKASGAIFVDRILSTPMRYPCNYGYVPNTLCGDGDPADVLVVLPLPLVPGSVVRCRPVGVLRMSDEAGSDEKILAVPIEKIFSGYAHIEDINQVSSHWMERIGHFFEHYKDLEKGKWVKLDGWGGAAEAKRILTESVERYNSDAP.

Lys30, Arg44, and Tyr56 together coordinate substrate. Mg(2+) is bound by residues Asp66, Asp71, and Asp103. Position 142 (Tyr142) interacts with substrate.

Belongs to the PPase family. As to quaternary structure, homohexamer. It depends on Mg(2+) as a cofactor.

Its subcellular location is the cytoplasm. It carries out the reaction diphosphate + H2O = 2 phosphate + H(+). Its function is as follows. Catalyzes the hydrolysis of inorganic pyrophosphate (PPi) forming two phosphate ions. The chain is Inorganic pyrophosphatase from Xanthomonas axonopodis pv. citri (strain 306).